The chain runs to 886 residues: Inter-alpha-trypsin inhibitor heavy chain H3 (886 aa).

A signal peptide spans 1 to 18; that stretch reads MWWPYLVLALLSGLEASG. Residues 19–30 constitute a propeptide that is removed on maturation; the sequence is FPRSPLRLLGKR. One can recognise a VIT domain in the interval 26 to 155; it reads LLGKRSLPEG…KVTFELTYEE (130 aa). A glycan (N-linked (GlcNAc...) asparagine) is linked at Asn88. One can recognise a VWFA domain in the interval 279-439; sequence PKNIVFVIDI…YNFLETMALE (161 aa). Asn577 is a glycosylation site (N-linked (GlcNAc...) asparagine). Asp646 bears the Aspartate 1-(chondroitin 4-sulfate)-ester mark. A propeptide spanning residues 647–886 is cleaved from the precursor; it reads PHFIIQVPGK…HTDYIVPSLF (240 aa).

Belongs to the ITIH family. As to quaternary structure, I-alpha-I plasma protease inhibitors are assembled from one or two heavy chains (HC) and one light chain, bikunin. Pre-alpha-inhibitor (P-alpha-I) is composed of ITIH3/HC3 and bikunin. Post-translationally, heavy chains are linked to bikunin via chondroitin 4-sulfate esterified to the alpha-carboxyl of the C-terminal aspartate after propeptide cleavage.

It is found in the secreted. May act as a carrier of hyaluronan in serum or as a binding protein between hyaluronan and other matrix protein, including those on cell surfaces in tissues to regulate the localization, synthesis and degradation of hyaluronan which are essential to cells undergoing biological processes. In Mesocricetus auratus (Golden hamster), this protein is Inter-alpha-trypsin inhibitor heavy chain H3 (ITIH3).